The primary structure comprises 178 residues: uncharacterized protein (178 aa).

Residues Met-1–Ser-19 form the signal peptide. Residues Arg-52, Glu-60, and Arg-94 contribute to the active site.

Belongs to the thermonuclease family.

This is an uncharacterized protein from Haemophilus influenzae (strain ATCC 51907 / DSM 11121 / KW20 / Rd).